The sequence spans 1669 residues: Formin-like protein 12 (1669 aa).

Positions 5 to 193 constitute a Phosphatase tensin-type domain; sequence RRLFYRKPPD…QYICKMDDEL (189 aa). Catalysis depends on Cys126, which acts as the Phosphocysteine intermediate. The C2 tensin-type domain maps to 199 to 338; it reads PIPFTLDCVI…FKAEVLFSEF (140 aa). 3 disordered regions span residues 688–709, 1025–1240, and 1631–1669; these read QGSS…DANE, DAGP…GHGL, and IEAD…SPFK. Basic and acidic residues predominate over residues 1036-1050; the sequence is LEWKRCPHHPPERPH. Composition is skewed to pro residues over residues 1060–1069, 1098–1127, 1136–1190, and 1198–1230; these read PSPPSPPPPQ, APPP…PPPI, PPAP…PPPR, and PPTP…PAPP. The FH2 domain occupies 1247–1646; sequence NSAATARRST…KAQKEAEKEA (400 aa).

Belongs to the formin-like family. Class-II subfamily.

The polypeptide is Formin-like protein 12 (FH12) (Oryza sativa subsp. japonica (Rice)).